Reading from the N-terminus, the 414-residue chain is Multifunctional CCA protein (414 aa).

2 residues coordinate ATP: G8 and R11. CTP contacts are provided by G8 and R11. Mg(2+)-binding residues include D21 and D23. Residues R91, R137, and R140 each contribute to the ATP site. 3 residues coordinate CTP: R91, R137, and R140. Residues 228-329 enclose the HD domain; the sequence is TGIHTLLTLA…LKLLDTIDVW (102 aa).

This sequence belongs to the tRNA nucleotidyltransferase/poly(A) polymerase family. Bacterial CCA-adding enzyme type 1 subfamily. In terms of assembly, monomer. Can also form homodimers and oligomers. Mg(2+) serves as cofactor. The cofactor is Ni(2+).

It carries out the reaction a tRNA precursor + 2 CTP + ATP = a tRNA with a 3' CCA end + 3 diphosphate. The catalysed reaction is a tRNA with a 3' CCA end + 2 CTP + ATP = a tRNA with a 3' CCACCA end + 3 diphosphate. Functionally, catalyzes the addition and repair of the essential 3'-terminal CCA sequence in tRNAs without using a nucleic acid template. Adds these three nucleotides in the order of C, C, and A to the tRNA nucleotide-73, using CTP and ATP as substrates and producing inorganic pyrophosphate. tRNA 3'-terminal CCA addition is required both for tRNA processing and repair. Also involved in tRNA surveillance by mediating tandem CCA addition to generate a CCACCA at the 3' terminus of unstable tRNAs. While stable tRNAs receive only 3'-terminal CCA, unstable tRNAs are marked with CCACCA and rapidly degraded. This Edwardsiella ictaluri (strain 93-146) protein is Multifunctional CCA protein.